Consider the following 332-residue polypeptide: MAHQLRFAAAREPISEEYPAVALPHPRCISVAFPPPRFTPSPSPLTNYSFLAALTPQELEMRLQIAMDVQMISKLDQRKLQTMASLLTSDPDYFLMIARNMNGSKRIQKLLGKTDDVDALFAAAILRRFLHIITDKYASYVVRRGMTVFDKKKKKAMYEHILHYASHIARDKHGNLALNDIITDAYRNKLFDVIAHKALVLSNDAYGNFVIQRVLKLNDLRSKNNIVVSLRGHFVDLSFQKYGSYVVDVLLETKESMVVVVEELMECEGDMLMRLARNEYGNFLVCKALRVTQKEMVRTDLFWGLVHKLKPFHNLLRWSRGKNIASILNSIR.

Positions 1–332 (MAHQLRFAAA…NIASILNSIR (332 aa)) constitute a PUM-HD domain. Pumilio repeat units lie at residues 89 to 124 (SDPDYFLMIARNMNGSKRIQKLLGKTDDVDALFAAA) and 125 to 159 (ILRRFLHIITDKYASYVVRRGMTVFDKKKKKAMYE). One copy of the Pumilio 3; degenerate repeat lies at 160 to 191 (HILHYASHIARDKHGNLALNDIITDAYRNKLF). 3 Pumilio repeats span residues 192-228 (DVIAHKALVLSNDAYGNFVIQRVLKLNDLRSKNNIVV), 229-266 (SLRGHFVDLSFQKYGSYVVDVLLETKESMVVVVEELME), and 267-303 (CEGDMLMRLARNEYGNFLVCKALRVTQKEMVRTDLFW).

Its subcellular location is the cytoplasm. In terms of biological role, sequence-specific RNA-binding protein that regulates translation and mRNA stability by binding the 3'-UTR of target mRNAs. The polypeptide is Putative pumilio homolog 20 (APUM20) (Arabidopsis thaliana (Mouse-ear cress)).